Consider the following 296-residue polypeptide: Phosphoribosylaminoimidazole-succinocarboxamide synthase (296 aa).

Belongs to the SAICAR synthetase family.

It carries out the reaction 5-amino-1-(5-phospho-D-ribosyl)imidazole-4-carboxylate + L-aspartate + ATP = (2S)-2-[5-amino-1-(5-phospho-beta-D-ribosyl)imidazole-4-carboxamido]succinate + ADP + phosphate + 2 H(+). Its pathway is purine metabolism; IMP biosynthesis via de novo pathway; 5-amino-1-(5-phospho-D-ribosyl)imidazole-4-carboxamide from 5-amino-1-(5-phospho-D-ribosyl)imidazole-4-carboxylate: step 1/2. This is Phosphoribosylaminoimidazole-succinocarboxamide synthase from Geobacter sulfurreducens (strain ATCC 51573 / DSM 12127 / PCA).